A 300-amino-acid chain; its full sequence is MAAANSWWEIRILCHPSLEETAFWRLEKFGCLGTSTEKKAHSLLVRGYLPQEKAEILDLAALALWCEQDALLFQVPKPRFHWQLIDEEDWSISWKEHWQPTPVGDRFIIYPAWIDPPENSDRLILRLDPGVAFGTGTHATTQLCLESLEMRVEPDKHQVLADLGCGSGILGIGAVLLGAAKVYGVDNDPLTVESARHNRHLNQIHPDNLVINEGSVPELEQLIAEPVDGIICNILAEVIVDLLPQFTPLVKPHGWAILSGIMVEQSQAIADALEQNGWTVVAIWKRQEWCCFQARREEGD.

4 residues coordinate S-adenosyl-L-methionine: Thr141, Gly164, Asp186, and Asn233.

The protein belongs to the methyltransferase superfamily. PrmA family.

It localises to the cytoplasm. It catalyses the reaction L-lysyl-[protein] + 3 S-adenosyl-L-methionine = N(6),N(6),N(6)-trimethyl-L-lysyl-[protein] + 3 S-adenosyl-L-homocysteine + 3 H(+). Its function is as follows. Methylates ribosomal protein L11. This chain is Ribosomal protein L11 methyltransferase, found in Synechocystis sp. (strain ATCC 27184 / PCC 6803 / Kazusa).